Here is a 131-residue protein sequence, read N- to C-terminus: Small ribosomal subunit protein uS8 (131 aa).

It belongs to the universal ribosomal protein uS8 family. Part of the 30S ribosomal subunit. Contacts proteins S5 and S12.

One of the primary rRNA binding proteins, it binds directly to 16S rRNA central domain where it helps coordinate assembly of the platform of the 30S subunit. The protein is Small ribosomal subunit protein uS8 of Bacteroides thetaiotaomicron (strain ATCC 29148 / DSM 2079 / JCM 5827 / CCUG 10774 / NCTC 10582 / VPI-5482 / E50).